Reading from the N-terminus, the 205-residue chain is Small ribosomal subunit protein uS4 (205 aa).

The S4 RNA-binding domain occupies 95–163 (RRLDNVVYRL…FKENLESRDP (69 aa)).

Belongs to the universal ribosomal protein uS4 family. Part of the 30S ribosomal subunit. Contacts protein S5. The interaction surface between S4 and S5 is involved in control of translational fidelity.

Its function is as follows. One of the primary rRNA binding proteins, it binds directly to 16S rRNA where it nucleates assembly of the body of the 30S subunit. With S5 and S12 plays an important role in translational accuracy. This is Small ribosomal subunit protein uS4 from Persephonella marina (strain DSM 14350 / EX-H1).